Reading from the N-terminus, the 309-residue chain is MQIQFLGTGAGQPSKARNVSSLALKLLDEINQVWLFDCGEGTQNRILETTIRPRKVAKIFITHLHGDHIFGLPGFLSSRSFQSSEEQTDIDIYGPVGIRSFVLASLKVSGTRLPYRIHFHEFDVDTVGQVLETDKFTVFAEKLDHTIPCVGYRVIQKDLEGTLDAEALRAAGVPFGPLFGKIKNGQNVTLEDGTEIIASDYISPPRPGKVVTILGDTRKCHASVRLAVNADVLVHEATYGKGDEKIARKHGHSTNMEAAQVAKDAGVKQLLLNHISPRFLSKDISQLRKDASTIFEQVHIVKDLEEIEL.

Zn(2+) is bound by residues histidine 63, histidine 65, aspartate 67, histidine 68, histidine 145, aspartate 216, and histidine 274. Aspartate 67 (proton acceptor) is an active-site residue.

It belongs to the RNase Z family. As to quaternary structure, homodimer. Zn(2+) serves as cofactor.

It carries out the reaction Endonucleolytic cleavage of RNA, removing extra 3' nucleotides from tRNA precursor, generating 3' termini of tRNAs. A 3'-hydroxy group is left at the tRNA terminus and a 5'-phosphoryl group is left at the trailer molecule.. Zinc phosphodiesterase, which displays some tRNA 3'-processing endonuclease activity. Probably involved in tRNA maturation, by removing a 3'-trailer from precursor tRNA. This is Ribonuclease Z from Streptococcus suis (strain 98HAH33).